A 589-amino-acid polypeptide reads, in one-letter code: Arylsulfatase L (589 aa).

A signal peptide spans 1 to 31; it reads MLHLHHSCLCFRSWLPAMLAVLLSLAPSASS. Residues D46 and D47 each contribute to the Ca(2+) site. N58 carries N-linked (GlcNAc...) asparagine glycosylation. Ca(2+) is bound at residue C86. The active-site Nucleophile is the C86. 3-oxoalanine (Cys) is present on C86. N-linked (GlcNAc...) asparagine glycosylation is present at N125. Substrate is bound at residue K145. Residue H147 is part of the active site. N258 carries N-linked (GlcNAc...) asparagine glycosylation. Position 301 (H301) interacts with substrate. N-linked (GlcNAc...) asparagine glycosylation occurs at N344. Residues D353 and H354 each contribute to the Ca(2+) site. K378 is a binding site for substrate.

Belongs to the sulfatase family. Ca(2+) is required as a cofactor. N-glycosylated. In terms of processing, the conversion to 3-oxoalanine (also known as C-formylglycine, FGly), of a serine or cysteine residue in prokaryotes and of a cysteine residue in eukaryotes, is critical for catalytic activity. Expressed in the pancreas, liver and kidney.

The protein localises to the golgi apparatus. Its subcellular location is the golgi stack. The enzyme catalyses an aryl sulfate + H2O = a phenol + sulfate + H(+). Its activity is regulated as follows. Inhibited by millimolar concentrations of warfarin. In terms of biological role, exhibits arylsulfatase activity towards the artificial substrate 4-methylumbelliferyl sulfate. May be essential for the correct composition of cartilage and bone matrix during development. Has no activity toward steroid sulfates. The protein is Arylsulfatase L of Homo sapiens (Human).